A 220-amino-acid chain; its full sequence is Fructose-6-phosphate aldolase (220 aa).

Catalysis depends on K85, which acts as the Schiff-base intermediate with substrate.

The protein belongs to the transaldolase family. Type 3A subfamily. Homodecamer.

It localises to the cytoplasm. The enzyme catalyses beta-D-fructose 6-phosphate = dihydroxyacetone + D-glyceraldehyde 3-phosphate. Catalyzes the reversible formation of fructose 6-phosphate from dihydroxyacetone and D-glyceraldehyde 3-phosphate via an aldolization reaction. This chain is Fructose-6-phosphate aldolase, found in Salmonella choleraesuis (strain SC-B67).